Here is a 388-residue protein sequence, read N- to C-terminus: MSIDDFKPEKWTISSNEALKLSLVSEDNAIQFSPTFTYPIFGTEEQIFGYKDLVIHLAFDAITFKPFLNVKFSSKFEGSEEELVNIKEKLLEYLPIDDTIYKDEEKWIDSFKKEQESIEAYKNDQNIDEYKIDNADFEIYKVNLQDPKMKRFHRRIQIFSLLFIEAASYIDEDDPKWEIFIVQTKKDKKFVGYATAYNYWYYPGANNFDSESKYRYRGKISQFLILPPYQGRGHGSHLYNSIVKNWRNDSSILEIVVEDPNESFDDLRDVNDLEMLYKDGFFNKLPQERPIPNAWIESTRLKYKIEKRQFSRLLEMILLSTGSNNFEYQVKQRLLIKNKDGLEGMEVSDIKDALNKSFESLREDYDRILGKCQFSNDADGPSKKKIKT.

The region spanning 142 to 306 is the N-acetyltransferase domain; sequence VNLQDPKMKR…ESTRLKYKIE (165 aa). Residues 197 to 199 are interaction with histone H4 N-terminus; that stretch reads YNY. Acetyl-CoA contacts are provided by residues 223–225 and 230–236; these read FLI and QGRGHGS. Glutamate 258 serves as the catalytic Proton donor/acceptor.

Belongs to the HAT1 family. In terms of assembly, component of the HAT-B complex composed of at least HAT1 and HAT2. The HAT-B complex binds to histone H4 tail.

It is found in the cytoplasm. Its subcellular location is the nucleus. The catalysed reaction is L-lysyl-[protein] + acetyl-CoA = N(6)-acetyl-L-lysyl-[protein] + CoA + H(+). Its function is as follows. Catalytic component of the histone acetylase B (HAT-B) complex. Acetylates 'Lys-12' of histone H4 which is required for telomeric silencing. Has intrinsic substrate specificity that modifies lysine in recognition sequence GXGKXG. Involved in DNA double-strand break repair. The sequence is that of Histone acetyltransferase type B catalytic subunit (HAT1) from Candida glabrata (strain ATCC 2001 / BCRC 20586 / JCM 3761 / NBRC 0622 / NRRL Y-65 / CBS 138) (Yeast).